The following is a 364-amino-acid chain: tRNA-specific 2-thiouridylase MnmA 1 (364 aa).

ATP is bound by residues glycine 11–serine 18 and phenylalanine 37. Cysteine 96 serves as the catalytic Nucleophile. Cysteine 96 and cysteine 193 are disulfide-bonded. Position 120 (glycine 120) interacts with ATP. The interaction with tRNA stretch occupies residues lysine 142–glutamine 144. Cysteine 193 serves as the catalytic Cysteine persulfide intermediate. The interaction with tRNA stretch occupies residues arginine 309–tyrosine 310.

The protein belongs to the MnmA/TRMU family.

Its subcellular location is the cytoplasm. The catalysed reaction is S-sulfanyl-L-cysteinyl-[protein] + uridine(34) in tRNA + AH2 + ATP = 2-thiouridine(34) in tRNA + L-cysteinyl-[protein] + A + AMP + diphosphate + H(+). Functionally, catalyzes the 2-thiolation of uridine at the wobble position (U34) of tRNA, leading to the formation of s(2)U34. This chain is tRNA-specific 2-thiouridylase MnmA 1, found in Bacteroides fragilis (strain ATCC 25285 / DSM 2151 / CCUG 4856 / JCM 11019 / LMG 10263 / NCTC 9343 / Onslow / VPI 2553 / EN-2).